A 211-amino-acid polypeptide reads, in one-letter code: Ceramide-1-phosphate transfer protein (211 aa).

Residues D53, K57, R103, R107, and H147 each coordinate an N-acylsphingoid base 1-phosphate.

This sequence belongs to the GLTP family.

The protein localises to the cytoplasm. Its subcellular location is the cytosol. It is found in the golgi apparatus. It localises to the trans-Golgi network membrane. The protein resides in the cell membrane. The protein localises to the endosome membrane. Its subcellular location is the nucleus outer membrane. The enzyme catalyses N-(hexadecanoyl)-sphing-4-enine-1-phosphate(in) = N-(hexadecanoyl)-sphing-4-enine-1-phosphate(out). It carries out the reaction N-(9Z-octadecenoyl)-sphing-4-enine-1-phosphate(in) = N-(9Z-octadecenoyl)-sphing-4-enine-1-phosphate(out). Its function is as follows. Mediates the intracellular transfer of ceramide-1-phosphate (C1P) between organelle membranes and the cell membrane. Required for normal structure of the Golgi stacks. Can bind phosphoceramides with a variety of aliphatic chains, but has a preference for lipids with saturated C16:0 or monounsaturated C18:1 aliphatic chains, and is inefficient with phosphoceramides containing lignoceryl (C24:0). Plays a role in the regulation of the cellular levels of ceramide-1-phosphate, and thereby contributes to the regulation of phospholipase PLA2G4A activity and the release of arachidonic acid. Has no activity with galactosylceramide, lactosylceramide, sphingomyelin, phosphatidylcholine, phosphatidic acid and ceramide. C1P transfer is stimulated by phosphatidylserine in C1P source vesicles. Regulates autophagy and pyroptosis, but not apoptosis. The protein is Ceramide-1-phosphate transfer protein (cptp) of Danio rerio (Zebrafish).